A 603-amino-acid polypeptide reads, in one-letter code: DNA mismatch repair protein MutL (603 aa).

Residues 336–346 (EVSKKQKEQQK) are compositionally biased toward basic and acidic residues. 2 disordered regions span residues 336 to 355 (EVSK…MSFE) and 361 to 384 (KETP…DTSR).

Belongs to the DNA mismatch repair MutL/HexB family.

Functionally, this protein is involved in the repair of mismatches in DNA. It is required for dam-dependent methyl-directed DNA mismatch repair. May act as a 'molecular matchmaker', a protein that promotes the formation of a stable complex between two or more DNA-binding proteins in an ATP-dependent manner without itself being part of a final effector complex. This chain is DNA mismatch repair protein MutL, found in Listeria welshimeri serovar 6b (strain ATCC 35897 / DSM 20650 / CCUG 15529 / CIP 8149 / NCTC 11857 / SLCC 5334 / V8).